A 247-amino-acid chain; its full sequence is NAD(P)H-quinone oxidoreductase subunit K, chloroplastic (247 aa).

[4Fe-4S] cluster contacts are provided by cysteine 64, cysteine 65, cysteine 129, and cysteine 160.

It belongs to the complex I 20 kDa subunit family. In terms of assembly, NDH is composed of at least 16 different subunits, 5 of which are encoded in the nucleus. It depends on [4Fe-4S] cluster as a cofactor.

Its subcellular location is the plastid. The protein localises to the chloroplast thylakoid membrane. It carries out the reaction a plastoquinone + NADH + (n+1) H(+)(in) = a plastoquinol + NAD(+) + n H(+)(out). The catalysed reaction is a plastoquinone + NADPH + (n+1) H(+)(in) = a plastoquinol + NADP(+) + n H(+)(out). Functionally, NDH shuttles electrons from NAD(P)H:plastoquinone, via FMN and iron-sulfur (Fe-S) centers, to quinones in the photosynthetic chain and possibly in a chloroplast respiratory chain. The immediate electron acceptor for the enzyme in this species is believed to be plastoquinone. Couples the redox reaction to proton translocation, and thus conserves the redox energy in a proton gradient. In Mesostigma viride (Green alga), this protein is NAD(P)H-quinone oxidoreductase subunit K, chloroplastic.